Here is a 180-residue protein sequence, read N- to C-terminus: Major urinary protein 6 (180 aa).

The N-terminal stretch at 1–18 is a signal peptide; it reads MKMLLLLCLGLTLVCVHA. A disulfide bridge connects residues C82 and C175.

This sequence belongs to the calycin superfamily. Lipocalin family. In terms of tissue distribution, abundant in the urine of adult male mice but absent from that of females.

Its subcellular location is the secreted. In terms of biological role, binds pheromones that are released from drying urine of males. These pheromones affect the sexual behavior of females. The protein is Major urinary protein 6 (Mup6) of Mus musculus (Mouse).